Consider the following 128-residue polypeptide: Fluoride-specific ion channel FluC (128 aa).

The next 4 membrane-spanning stretches (helical) occupy residues 1 to 21 (MPER…GATA), 45 to 65 (LAGC…SLVS), 70 to 90 (LLLA…MYEI), and 99 to 119 (IFYS…CLYF). Na(+)-binding residues include glycine 78 and threonine 81.

It belongs to the fluoride channel Fluc/FEX (TC 1.A.43) family.

The protein resides in the cell inner membrane. It catalyses the reaction fluoride(in) = fluoride(out). Na(+) is not transported, but it plays an essential structural role and its presence is essential for fluoride channel function. In terms of biological role, fluoride-specific ion channel. Important for reducing fluoride concentration in the cell, thus reducing its toxicity. The polypeptide is Fluoride-specific ion channel FluC (Chlorobium phaeobacteroides (strain BS1)).